A 279-amino-acid polypeptide reads, in one-letter code: Urease accessory protein UreD (279 aa).

It belongs to the UreD family. UreD, UreF and UreG form a complex that acts as a GTP-hydrolysis-dependent molecular chaperone, activating the urease apoprotein by helping to assemble the nickel containing metallocenter of UreC. The UreE protein probably delivers the nickel.

The protein localises to the cytoplasm. Functionally, required for maturation of urease via the functional incorporation of the urease nickel metallocenter. This is Urease accessory protein UreD from Paracoccus denitrificans (strain Pd 1222).